A 372-amino-acid polypeptide reads, in one-letter code: Prostaglandin E synthase 2 (372 aa).

Topologically, residues Met-1–Arg-54 are lumenal. A helical membrane pass occupies residues Leu-55–His-71. Residues Thr-72–Gln-372 are Cytoplasmic-facing. One can recognise a Glutaredoxin domain in the interval Ser-87–Lys-190. Phosphoserine is present on Ser-92. Glutathione is bound by residues Val-145 and Asp-161 to Ser-162. One can recognise a GST C-terminal domain in the interval Asp-259 to Gln-372.

Belongs to the GST superfamily. May interact with CEBPB. Interacts with EXOSC10. Homodimer. Synthesized as a Golgi membrane-associated protein, and the proteolytic removal of the N-terminal hydrophobic domain leads to the formation of a mature cytosolic enzyme. Detected in heart (at protein level). Widely expressed. Expressed in heart &gt; kidney &gt; muscle &gt; testis &gt; endometrium = ovary &gt; myometrium = spleen = lung. In endometrium, it is mainly expressed in luminal epithelial cells followed by glandular epithelial cells, but expression is also present in stromal cells at a lower level.

Its subcellular location is the microsome membrane. The protein localises to the cytoplasm. The catalysed reaction is prostaglandin H2 = prostaglandin E2. The enzyme catalyses prostaglandin H2 = (12S)-hydroxy-(5Z,8E,10E)-heptadecatrienoate + malonaldehyde. The protein operates within lipid metabolism; prostaglandin biosynthesis. With respect to regulation, isomerase activity is increased by sulfhydril compounds. Dithiothreitol (DTT) is most effective, followed by glutathione (GSH) and 2-mercaptoethanol. Functionally, isomerase that catalyzes the conversion of PGH2 into the more stable prostaglandin E2 (PGE2) (in vitro). The biological function and the GSH-dependent property of PTGES2 is still under debate. In vivo, PTGES2 could form a complex with GSH and heme and would not participate in PGE2 synthesis but would catalyze the degradation of prostaglandin E2 H2 (PGH2) to 12(S)-hydroxy-5(Z),8(E),10(E)-heptadecatrienoic acid (HHT) and malondialdehyde (MDA). In Bos taurus (Bovine), this protein is Prostaglandin E synthase 2 (PTGES2).